We begin with the raw amino-acid sequence, 918 residues long: Signal transduction histidine-protein kinase BarA (918 aa).

Residues 1–10 (MTNYSLRARM) are Cytoplasmic-facing. Residues 11-31 (MILILAPTVLIGLLLSIFFVV) traverse the membrane as a helical segment. Residues 32–175 (HRYNDLQRQL…LKSVRLQQYK (144 aa)) are Periplasmic-facing. Residues 176 to 196 (EIFISCVMMLFCIGIALIFGW) form a helical membrane-spanning segment. Topologically, residues 197-918 (RLMRDVTGPI…VAREASKILG (722 aa)) are cytoplasmic. Residues 200-252 (RDVTGPIRNMVNTVDRIRRGQLDSRVEGFMLGELDMLKNGINSMAMSLAAYHE) enclose the HAMP domain. Positions 299–520 (NMSHELRTPL…TFWFHINLDL (222 aa)) constitute a Histidine kinase domain. Residue H302 is modified to Phosphohistidine; by autocatalysis. The Response regulatory domain occupies 669–785 (TVMAVDDNPA…RLHNLLLRYK (117 aa)). D718 carries the 4-aspartylphosphate modification. The region spanning 822–918 (KTDLARDMLQ…VAREASKILG (97 aa)) is the HPt domain. H861 bears the Phosphohistidine mark.

In terms of processing, activation requires a sequential transfer of a phosphate group from a His in the primary transmitter domain, to an Asp in the receiver domain and to a His in the secondary transmitter domain.

It is found in the cell inner membrane. The enzyme catalyses ATP + protein L-histidine = ADP + protein N-phospho-L-histidine.. Its function is as follows. Member of the two-component regulatory system UvrY/BarA involved in the regulation of carbon metabolism via the CsrA/CsrB regulatory system. Phosphorylates UvrY, probably via a four-step phosphorelay. The sequence is that of Signal transduction histidine-protein kinase BarA (barA) from Shigella flexneri.